A 177-amino-acid chain; its full sequence is Large ribosomal subunit protein uL6 (177 aa).

This sequence belongs to the universal ribosomal protein uL6 family. In terms of assembly, part of the 50S ribosomal subunit.

Its function is as follows. This protein binds to the 23S rRNA, and is important in its secondary structure. It is located near the subunit interface in the base of the L7/L12 stalk, and near the tRNA binding site of the peptidyltransferase center. The polypeptide is Large ribosomal subunit protein uL6 (Dichelobacter nodosus (strain VCS1703A)).